We begin with the raw amino-acid sequence, 318 residues long: CRISPR-associated protein Cas7/Csa2 1 (318 aa).

This sequence belongs to the CRISPR-associated protein Cas7/Cst2/DevR family. Subtype I-a/Apern subfamily. As to quaternary structure, part of the aCascade ribonucleoprotein complex, minimally composed of Csa2 and Cas5a, which binds crRNA. Other possible components of aCascade in strain P1 are Cas6b (SSO1437) and Csa5 (SSO1443), while SSO1399, Cas5b (SSO1400) and SSO1401 have sometimes been seen weakly associated. Csa2 is probably the major RNA-binding subunit. The Csa2-Cas5a-crRNA complex also binds target DNA homologous to crRNA, probably forming an R-loop. Purified aCascade forms a filament about 6 nm in width.

Its function is as follows. CRISPR (clustered regularly interspaced short palindromic repeat) is an adaptive immune system that provides protection against mobile genetic elements (viruses, transposable elements and conjugative plasmids). CRISPR clusters contain spacers, sequences complementary to antecedent mobile elements, and target invading nucleic acids. CRISPR clusters are transcribed and processed into CRISPR RNA (crRNA). In Saccharolobus solfataricus (strain ATCC 35092 / DSM 1617 / JCM 11322 / P2) (Sulfolobus solfataricus), this protein is CRISPR-associated protein Cas7/Csa2 1 (cas7a).